The following is a 471-amino-acid chain: Lincomycin resistance protein LmrB (471 aa).

The next 12 membrane-spanning stretches (helical) occupy residues Pro-13–Asn-35, Leu-55–Phe-77, Phe-84–Leu-106, Val-111–Pro-133, Ala-140–Ile-162, Thr-167–Phe-189, Ile-201–Ala-223, Gly-227–Trp-249, Phe-269–Pro-291, Ala-329–Thr-351, Ser-358–Ala-380, and Gly-445–Ile-467.

The protein belongs to the major facilitator superfamily. EmrB family.

Its subcellular location is the cell membrane. In terms of biological role, proton-dependent transporter. May mediate the efflux of lincomycin. The sequence is that of Lincomycin resistance protein LmrB (lmrB) from Listeria monocytogenes serovar 1/2a (strain ATCC BAA-679 / EGD-e).